The chain runs to 134 residues: DNA-directed RNA polymerase subunit omega (134 aa).

A disordered region spans residues 77–108 (IDEPEPDPASLLAAGGNASASGDEEEDAPEAV). Positions 85 to 97 (ASLLAAGGNASAS) are enriched in low complexity.

It belongs to the RNA polymerase subunit omega family. In terms of assembly, the RNAP catalytic core consists of 2 alpha, 1 beta, 1 beta' and 1 omega subunit. When a sigma factor is associated with the core the holoenzyme is formed, which can initiate transcription.

The enzyme catalyses RNA(n) + a ribonucleoside 5'-triphosphate = RNA(n+1) + diphosphate. Functionally, promotes RNA polymerase assembly. Latches the N- and C-terminal regions of the beta' subunit thereby facilitating its interaction with the beta and alpha subunits. The protein is DNA-directed RNA polymerase subunit omega of Rhizobium rhizogenes (strain K84 / ATCC BAA-868) (Agrobacterium radiobacter).